The primary structure comprises 206 residues: LexA repressor (206 aa).

Positions 28-48 form a DNA-binding region, H-T-H motif; it reads RAEIATRLGFKSANAAEEHLK. Active-site for autocatalytic cleavage activity residues include Ser123 and Lys160.

This sequence belongs to the peptidase S24 family. Homodimer.

The enzyme catalyses Hydrolysis of Ala-|-Gly bond in repressor LexA.. Its function is as follows. Represses a number of genes involved in the response to DNA damage (SOS response), including recA and lexA. In the presence of single-stranded DNA, RecA interacts with LexA causing an autocatalytic cleavage which disrupts the DNA-binding part of LexA, leading to derepression of the SOS regulon and eventually DNA repair. This Shewanella sp. (strain MR-4) protein is LexA repressor.